Reading from the N-terminus, the 45-residue chain is Cytochrome b559 subunit beta (45 aa).

Residues 20–36 (WLAVHTLGVPTVFFLGA) traverse the membrane as a helical segment. Histidine 24 is a heme binding site.

This sequence belongs to the PsbE/PsbF family. In terms of assembly, heterodimer of an alpha subunit and a beta subunit. PSII is composed of 1 copy each of membrane proteins PsbA, PsbB, PsbC, PsbD, PsbE, PsbF, PsbH, PsbI, PsbJ, PsbK, PsbL, PsbM, PsbT, PsbX, PsbY, PsbZ, Psb30/Ycf12, peripheral proteins PsbO, CyanoQ (PsbQ), PsbU, PsbV and a large number of cofactors. It forms dimeric complexes. Heme b serves as cofactor.

It localises to the cellular thylakoid membrane. Functionally, this b-type cytochrome is tightly associated with the reaction center of photosystem II (PSII). PSII is a light-driven water:plastoquinone oxidoreductase that uses light energy to abstract electrons from H(2)O, generating O(2) and a proton gradient subsequently used for ATP formation. It consists of a core antenna complex that captures photons, and an electron transfer chain that converts photonic excitation into a charge separation. This is Cytochrome b559 subunit beta from Nostoc punctiforme (strain ATCC 29133 / PCC 73102).